Here is a 111-residue protein sequence, read N- to C-terminus: Cell division protein FtsB (111 aa).

Residues 1–3 (MRL) lie on the Cytoplasmic side of the membrane. A helical transmembrane segment spans residues 4–21 (LFLVLLVLLGLIQYPLWL). Residues 22–111 (GKGGWFKVWD…PGQTASAPRR (90 aa)) lie on the Periplasmic side of the membrane. The stretch at 31–62 (DLQRQVAAQHETNDGLRARNAALEAEVRDLAT) forms a coiled coil. The segment at 88–111 (VPPGTPVPQPAPGAPGQTASAPRR) is disordered. Residues 90 to 100 (PGTPVPQPAPG) are compositionally biased toward pro residues. Positions 101 to 111 (APGQTASAPRR) are enriched in low complexity.

This sequence belongs to the FtsB family. Part of a complex composed of FtsB, FtsL and FtsQ.

Its subcellular location is the cell inner membrane. In terms of biological role, essential cell division protein. May link together the upstream cell division proteins, which are predominantly cytoplasmic, with the downstream cell division proteins, which are predominantly periplasmic. This is Cell division protein FtsB from Bordetella petrii (strain ATCC BAA-461 / DSM 12804 / CCUG 43448).